A 234-amino-acid chain; its full sequence is UPF0173 metal-dependent hydrolase Smed_0942 (234 aa).

It belongs to the UPF0173 family.

This chain is UPF0173 metal-dependent hydrolase Smed_0942, found in Sinorhizobium medicae (strain WSM419) (Ensifer medicae).